The chain runs to 95 residues: Large ribosomal subunit protein bL25 (95 aa).

This sequence belongs to the bacterial ribosomal protein bL25 family. As to quaternary structure, part of the 50S ribosomal subunit; part of the 5S rRNA/L5/L18/L25 subcomplex. Contacts the 5S rRNA. Binds to the 5S rRNA independently of L5 and L18.

This is one of the proteins that binds to the 5S RNA in the ribosome where it forms part of the central protuberance. This Yersinia enterocolitica serotype O:8 / biotype 1B (strain NCTC 13174 / 8081) protein is Large ribosomal subunit protein bL25.